Reading from the N-terminus, the 176-residue chain is Disulfide bond formation protein B (176 aa).

Over 1 to 14 the chain is Cytoplasmic; the sequence is MLRFLNQCSQGRGA. A helical transmembrane segment spans residues 15-31; sequence WLLMAFTALALELTALW. The Periplasmic segment spans residues 32-49; that stretch reads FQHVMLLKPCVLCIYERC. C41 and C44 form a disulfide bridge. The chain crosses the membrane as a helical span at residues 50 to 65; the sequence is ALFGVLGAALIGAIAP. At 66 to 71 the chain is on the cytoplasmic side; the sequence is KTPLRY. The helical transmembrane segment at 72 to 89 threads the bilayer; sequence VAMVIWLYSAFRGVQLTY. The Periplasmic portion of the chain corresponds to 90-144; that stretch reads EHTMLQLYPSPFATCDFMARFPEWLPLDKWVPQVFVASGDCAERQWEFLGLEMPQ. C104 and C130 form a disulfide bridge. Residues 145 to 163 traverse the membrane as a helical segment; the sequence is WLLGIFIAYLIVAVLVVIS. Over 164–176 the chain is Cytoplasmic; the sequence is QPFKAKKRDLFGR.

Belongs to the DsbB family.

It is found in the cell inner membrane. In terms of biological role, required for disulfide bond formation in some periplasmic proteins. Acts by oxidizing the DsbA protein. This chain is Disulfide bond formation protein B, found in Escherichia coli O1:K1 / APEC.